The primary structure comprises 120 residues: Large ribosomal subunit protein uL18c (120 aa).

This sequence belongs to the universal ribosomal protein uL18 family. Part of the 50S ribosomal subunit; contacts the 5S rRNA.

The protein resides in the plastid. Its subcellular location is the chloroplast. In terms of biological role, binds 5S rRNA, forms part of the central protuberance of the 50S subunit. This chain is Large ribosomal subunit protein uL18c (rpl18), found in Porphyra purpurea (Red seaweed).